The sequence spans 956 residues: Cytolysin RtxA (956 aa).

The interval 48 to 58 (LTIPKDYDIEK) is cholesterol recognition/amino acid consensus (CRAC) region 1. Cholesterol recognition/amino acid consensus (CARC) region stretches follow at residues 280 to 287 (KAISSYVL) and 340 to 348 (KFGYDGDSL). Residues 349–354 (LAEYQR) form a cholesterol recognition/amino acid consensus (CRAC) region 2 region. Positions 444-453 (RHAHYLERNL) are cholesterol recognition/amino acid consensus (CARC) region 3. Lys-558 carries the N6-myristoyl lysine lipid modification. One copy of the Hemolysin-type calcium-binding 1 repeat lies at 613–639 (VNAGSGNDDIFAGQGKMNVDGGTGHDR). Lys-689 carries the N6-myristoyl lysine lipid modification. Hemolysin-type calcium-binding repeat units follow at residues 722-756 (GSQF…DDRL) and 757-791 (FGGN…GNDV).

This sequence belongs to the RTX prokaryotic toxin (TC 1.C.11) family. In terms of processing, myristoylated by RtxC; the toxin only becomes active when modified. Mainly myristoylated; a very minor fraction is acylated with hydroxymyristoyl, lauroyl and palmitoleyl chains fatty acyl groups. Fatty acylation is involved in binding to host membranes and promotes the irreversible insertion of RtxA into the host cell membrane.

The protein localises to the secreted. It localises to the host cell membrane. Its function is as follows. Bacterial cytolysin that attacks host cell membranes and causes cell rupture by forming a pore. Binds and permeabilizes target cells by forming cation-selective pores. Constitutes the key virulence cytotoxin of K.kingae. Binds cholesterol and oligosaccharides on the surface of host cells. Does not bind beta-2 integrin (ITGB2) on the host cell surface. The polypeptide is Cytolysin RtxA (Kingella kingae).